The sequence spans 1392 residues: DNA-directed RNA polymerase subunit beta (1392 aa).

The protein belongs to the RNA polymerase beta chain family. The RNAP catalytic core consists of 2 alpha, 1 beta, 1 beta' and 1 omega subunit. When a sigma factor is associated with the core the holoenzyme is formed, which can initiate transcription.

It catalyses the reaction RNA(n) + a ribonucleoside 5'-triphosphate = RNA(n+1) + diphosphate. DNA-dependent RNA polymerase catalyzes the transcription of DNA into RNA using the four ribonucleoside triphosphates as substrates. The sequence is that of DNA-directed RNA polymerase subunit beta from Neisseria gonorrhoeae (strain ATCC 700825 / FA 1090).